The primary structure comprises 173 residues: Phosphopantetheine adenylyltransferase (173 aa).

Substrate is bound at residue S9. ATP-binding positions include 9–10 and H17; that span reads SF. Substrate-binding residues include K41, T73, and R87. ATP contacts are provided by residues 88–90, E98, and 123–129; these read GVR and YQYLSSS.

It belongs to the bacterial CoaD family. As to quaternary structure, homohexamer. Requires Mg(2+) as cofactor.

The protein resides in the cytoplasm. The enzyme catalyses (R)-4'-phosphopantetheine + ATP + H(+) = 3'-dephospho-CoA + diphosphate. It functions in the pathway cofactor biosynthesis; coenzyme A biosynthesis; CoA from (R)-pantothenate: step 4/5. In terms of biological role, reversibly transfers an adenylyl group from ATP to 4'-phosphopantetheine, yielding dephospho-CoA (dPCoA) and pyrophosphate. This Limosilactobacillus fermentum (strain NBRC 3956 / LMG 18251) (Lactobacillus fermentum) protein is Phosphopantetheine adenylyltransferase.